We begin with the raw amino-acid sequence, 102 residues long: Large ribosomal subunit protein bL21 (102 aa).

This sequence belongs to the bacterial ribosomal protein bL21 family. In terms of assembly, part of the 50S ribosomal subunit. Contacts protein L20.

In terms of biological role, this protein binds to 23S rRNA in the presence of protein L20. In Pediococcus pentosaceus (strain ATCC 25745 / CCUG 21536 / LMG 10740 / 183-1w), this protein is Large ribosomal subunit protein bL21.